Reading from the N-terminus, the 323-residue chain is Acetyl esterase (323 aa).

The Involved in the stabilization of the negatively charged intermediate by the formation of the oxyanion hole motif lies at 91–93 (HGG). Catalysis depends on residues S165, D262, and H292.

The protein belongs to the 'GDXG' lipolytic enzyme family. In terms of assembly, homodimer. Interacts with MalT and MelA.

It localises to the cytoplasm. Functionally, displays esterase activity towards short chain fatty esters (acyl chain length of up to 8 carbons). Able to hydrolyze triacetylglycerol (triacetin) and tributyrylglycerol (tributyrin), but not trioleylglycerol (triolein) or cholesterol oleate. Negatively regulates MalT activity by antagonizing maltotriose binding. Inhibits MelA galactosidase activity. The polypeptide is Acetyl esterase (Salmonella paratyphi A (strain ATCC 9150 / SARB42)).